Reading from the N-terminus, the 300-residue chain is GTPase Era (300 aa).

In terms of domain architecture, Era-type G spans 8 to 176 (RCGYVAIVGR…EALIAKHLPE (169 aa)). Residues 16–23 (GRPNVGKS) are G1. Residue 16–23 (GRPNVGKS) coordinates GTP. Residues 42-46 (QTTRH) form a G2 region. Residues 63–66 (DTPG) are G3. GTP-binding positions include 63-67 (DTPGM) and 125-128 (NKTD). The G4 stretch occupies residues 125–128 (NKTD). The tract at residues 155-157 (ISA) is G5. The KH type-2 domain maps to 199–283 (VREKIMRQLG…MLNLWVKVKG (85 aa)).

This sequence belongs to the TRAFAC class TrmE-Era-EngA-EngB-Septin-like GTPase superfamily. Era GTPase family. Monomer.

It localises to the cytoplasm. Its subcellular location is the cell inner membrane. Functionally, an essential GTPase that binds both GDP and GTP, with rapid nucleotide exchange. Plays a role in 16S rRNA processing and 30S ribosomal subunit biogenesis and possibly also in cell cycle regulation and energy metabolism. This Pseudomonas putida (strain W619) protein is GTPase Era.